A 356-amino-acid chain; its full sequence is Core protein VP7 (356 aa).

N41 carries an N-linked (GlcNAc...) asparagine; by host glycan.

Belongs to the orbivirus VP7 family.

The protein resides in the virion. Functionally, the VP7 protein is one of the five proteins (with VP1, VP3, VP4, and VP6) which form the inner capsid of the virus. In Broadhaven virus (BRD), this protein is Core protein VP7 (Segment-7).